The following is a 490-amino-acid chain: Probable glycine dehydrogenase (decarboxylating) subunit 2 (490 aa).

K273 carries the N6-(pyridoxal phosphate)lysine modification.

This sequence belongs to the GcvP family. C-terminal subunit subfamily. As to quaternary structure, the glycine cleavage system is composed of four proteins: P, T, L and H. In this organism, the P 'protein' is a heterodimer of two subunits. Pyridoxal 5'-phosphate serves as cofactor.

The enzyme catalyses N(6)-[(R)-lipoyl]-L-lysyl-[glycine-cleavage complex H protein] + glycine + H(+) = N(6)-[(R)-S(8)-aminomethyldihydrolipoyl]-L-lysyl-[glycine-cleavage complex H protein] + CO2. Functionally, the glycine cleavage system catalyzes the degradation of glycine. The P protein binds the alpha-amino group of glycine through its pyridoxal phosphate cofactor; CO(2) is released and the remaining methylamine moiety is then transferred to the lipoamide cofactor of the H protein. In Staphylococcus aureus (strain Newman), this protein is Probable glycine dehydrogenase (decarboxylating) subunit 2.